A 482-amino-acid chain; its full sequence is Glutamate--tRNA ligase (482 aa).

Positions 9 to 19 match the 'HIGH' region motif; that stretch reads PSPTGPIHVGN. Zn(2+)-binding residues include C106, C108, C133, and D135. The short motif at 250–254 is the 'KMSKS' region element; the sequence is KLSKR. K253 contacts ATP.

Belongs to the class-I aminoacyl-tRNA synthetase family. Glutamate--tRNA ligase type 1 subfamily. As to quaternary structure, monomer. Zn(2+) serves as cofactor.

It localises to the cytoplasm. It catalyses the reaction tRNA(Glu) + L-glutamate + ATP = L-glutamyl-tRNA(Glu) + AMP + diphosphate. Its function is as follows. Catalyzes the attachment of glutamate to tRNA(Glu) in a two-step reaction: glutamate is first activated by ATP to form Glu-AMP and then transferred to the acceptor end of tRNA(Glu). This is Glutamate--tRNA ligase from Symbiobacterium thermophilum (strain DSM 24528 / JCM 14929 / IAM 14863 / T).